A 369-amino-acid polypeptide reads, in one-letter code: MSDPVQPLLDEHAQLQRELADPAVHADAGRARKLGRRYSELNGIVEAHRRVERLSEDLEAARELGSMDPELAAEVKPLEEELAVAREALRRKLVPRDPDDGRNVILEVKAGEGGDESALFAGDLLRMYMRFAEQSGLKTEILSSTPTELGGYKDVQLAVKGSSSDPSEGAWARFKYEGGVHRVQRVPVTESQGRVHTSAAGVLVFPEVDEPDEIDISQNDLKIDVYRSSGPGGQSVNTTDSAVRITHVPTGIVVSMQNEKSQLQNREAAMRVLRARLLAHQQEQIDAENAAARKSQVRTVDRSERIRTYNFPENRIADHRTGYKAYNLDHVLDGALEPVIASAVELDEKARLEQLGQDSAEQGSAGRRG.

Position 234 is an N5-methylglutamine (Q234).

The protein belongs to the prokaryotic/mitochondrial release factor family. Post-translationally, methylated by PrmC. Methylation increases the termination efficiency of RF1.

It localises to the cytoplasm. Peptide chain release factor 1 directs the termination of translation in response to the peptide chain termination codons UAG and UAA. In Kocuria rhizophila (strain ATCC 9341 / DSM 348 / NBRC 103217 / DC2201), this protein is Peptide chain release factor 1.